The primary structure comprises 94 residues: Co-chaperonin GroES (94 aa).

Belongs to the GroES chaperonin family. Heptamer of 7 subunits arranged in a ring. Interacts with the chaperonin GroEL.

Its subcellular location is the cytoplasm. In terms of biological role, together with the chaperonin GroEL, plays an essential role in assisting protein folding. The GroEL-GroES system forms a nano-cage that allows encapsulation of the non-native substrate proteins and provides a physical environment optimized to promote and accelerate protein folding. GroES binds to the apical surface of the GroEL ring, thereby capping the opening of the GroEL channel. This is Co-chaperonin GroES from Streptococcus oralis.